The primary structure comprises 188 residues: M-phase phosphoprotein 6 homolog (188 aa).

Residues 93-188 form a disordered region; that stretch reads EENVDEKDVS…NKNKKKKKRN (96 aa). Over residues 120-149 the composition is skewed to basic and acidic residues; the sequence is LTERERRKQELVSKKAEASRKMEVKAPAKE. Ser-167 bears the Phosphoserine mark. Basic residues predominate over residues 174–188; it reads RKTKKNKNKKKKKRN.

The protein belongs to the MPP6 family. Associates with the RNA exosome complex.

The protein resides in the nucleus. RNA-binding protein that associates with the RNA exosome complex. This Schizosaccharomyces pombe (strain 972 / ATCC 24843) (Fission yeast) protein is M-phase phosphoprotein 6 homolog.